Here is a 405-residue protein sequence, read N- to C-terminus: L-carnitine CoA-transferase (405 aa).

CoA is bound by residues Lys-97 and Arg-104. The active-site Nucleophile is the Asp-169.

This sequence belongs to the CoA-transferase III family. CaiB subfamily. Homodimer.

The protein resides in the cytoplasm. The catalysed reaction is crotonobetainyl-CoA + (R)-carnitine = crotonobetaine + (R)-carnitinyl-CoA. It carries out the reaction 4-(trimethylamino)butanoyl-CoA + (R)-carnitine = (R)-carnitinyl-CoA + 4-(trimethylamino)butanoate. Its pathway is amine and polyamine metabolism; carnitine metabolism. Its function is as follows. Catalyzes the reversible transfer of the CoA moiety from gamma-butyrobetainyl-CoA to L-carnitine to generate L-carnitinyl-CoA and gamma-butyrobetaine. Is also able to catalyze the reversible transfer of the CoA moiety from gamma-butyrobetainyl-CoA or L-carnitinyl-CoA to crotonobetaine to generate crotonobetainyl-CoA. The chain is L-carnitine CoA-transferase from Escherichia fergusonii (strain ATCC 35469 / DSM 13698 / CCUG 18766 / IAM 14443 / JCM 21226 / LMG 7866 / NBRC 102419 / NCTC 12128 / CDC 0568-73).